Here is a 72-residue protein sequence, read N- to C-terminus: ATP synthase subunit c (72 aa).

Helical transmembrane passes span 1–21 (MSLG…GAGI) and 48–68 (MFIG…FSFI).

This sequence belongs to the ATPase C chain family. F-type ATPases have 2 components, F(1) - the catalytic core - and F(0) - the membrane proton channel. F(1) has five subunits: alpha(3), beta(3), gamma(1), delta(1), epsilon(1). F(0) has three main subunits: a(1), b(2) and c(10-14). The alpha and beta chains form an alternating ring which encloses part of the gamma chain. F(1) is attached to F(0) by a central stalk formed by the gamma and epsilon chains, while a peripheral stalk is formed by the delta and b chains.

The protein resides in the cell membrane. F(1)F(0) ATP synthase produces ATP from ADP in the presence of a proton or sodium gradient. F-type ATPases consist of two structural domains, F(1) containing the extramembraneous catalytic core and F(0) containing the membrane proton channel, linked together by a central stalk and a peripheral stalk. During catalysis, ATP synthesis in the catalytic domain of F(1) is coupled via a rotary mechanism of the central stalk subunits to proton translocation. Its function is as follows. Key component of the F(0) channel; it plays a direct role in translocation across the membrane. A homomeric c-ring of between 10-14 subunits forms the central stalk rotor element with the F(1) delta and epsilon subunits. The sequence is that of ATP synthase subunit c from Geobacillus kaustophilus (strain HTA426).